Here is a 608-residue protein sequence, read N- to C-terminus: Fatty acid amide hydrolase (608 aa).

Residues Lys-206 and Ser-282 each act as charge relay system in the active site. 303 to 306 contacts substrate; it reads GGGS. Ser-306 serves as the catalytic Acyl-ester intermediate.

Belongs to the amidase family. As to quaternary structure, forms homodimers.

It is found in the endoplasmic reticulum membrane. The protein localises to the cell membrane. It catalyses the reaction N-(9Z,12Z-octadecadienoyl)-ethanolamine + H2O = ethanolamine + (9Z,12Z)-octadecadienoate. It carries out the reaction N-hexadecanoylethanolamine + H2O = ethanolamine + hexadecanoate. The enzyme catalyses N-dodecanoylethanolamine + H2O = dodecanoate + ethanolamine. With respect to regulation, inhibited by methyl arachidonyl fluorophosphonate (MAFP). In terms of biological role, catalyzes the hydrolysis of bioactive endogenous fatty acid amides to their corresponding acids. The hydrolysis of endogenous amidated lipids terminates their participation as lipid mediators in various signaling systems. Converts a wide range of N-acylethanolamines (NAEs) to their corresponding free fatty acids and ethanolamine. In Oryza sativa subsp. japonica (Rice), this protein is Fatty acid amide hydrolase.